We begin with the raw amino-acid sequence, 911 residues long: Translation initiation factor IF-2 (911 aa).

Composition is skewed to basic and acidic residues over residues 80-94 (LEEQ…EQQL) and 101-113 (RPER…RTEV). Disordered regions lie at residues 80–142 (LEEQ…VSEP), 153–172 (VKSP…DVEG), and 195–309 (SSLG…KMRK). Residues 214–256 (KEQADELKDEFDIKAKEGGKEREAGGESRKPVKKGSEETKKTT) show a composition bias toward basic and acidic residues. Residues 262-272 (AKKKKGKKKKK) are compositionally biased toward basic residues. The segment covering 273–284 (PEVDEKTIEKNI) has biased composition (basic and acidic residues). Residues 286-300 (STISGMDDTSGSGSS) are compositionally biased toward low complexity. One can recognise a tr-type G domain in the interval 408–578 (IRPPVVTIMG…LTEAEIRELK (171 aa)). Positions 417 to 424 (GHVDHGKT) are G1. Position 417-424 (417-424 (GHVDHGKT)) interacts with GTP. The G2 stretch occupies residues 442–446 (GITQH). Residues 464–467 (DTPG) form a G3 region. GTP contacts are provided by residues 464–468 (DTPGH) and 518–521 (NKID). Positions 518–521 (NKID) are G4. The interval 554-556 (SAK) is G5.

The protein belongs to the TRAFAC class translation factor GTPase superfamily. Classic translation factor GTPase family. IF-2 subfamily.

It is found in the cytoplasm. Functionally, one of the essential components for the initiation of protein synthesis. Protects formylmethionyl-tRNA from spontaneous hydrolysis and promotes its binding to the 30S ribosomal subunits. Also involved in the hydrolysis of GTP during the formation of the 70S ribosomal complex. The polypeptide is Translation initiation factor IF-2 (Chlorobium phaeobacteroides (strain BS1)).